A 128-amino-acid polypeptide reads, in one-letter code: SH2 domain-containing protein 1A (128 aa).

Positions 6–102 (VYHGKISRET…GIVIPLQYPV (97 aa)) constitute an SH2 domain. The interaction with FYN SH3 domain stretch occupies residues 67–92 (DTAPGVHKRFFRKIKNLISAFQKPDQ). Lys-89 carries the N6-acetyllysine modification. The disordered stretch occupies residues 103-128 (EKKSSARSTQGATGRREDPDVFLKTP). Positions 116–128 (GRREDPDVFLKTP) are enriched in basic and acidic residues.

As to quaternary structure, interacts with CD84, CD244, LY9, SLAMF1 and FYN. Interacts with NTRK1, NTRK2 and NTRK3.

The protein localises to the cytoplasm. Cytoplasmic adapter regulating receptors of the signaling lymphocytic activation molecule (SLAM) family such as SLAMF1, CD244, LY9, CD84, SLAMF6 and SLAMF7. In SLAM signaling seems to cooperate with SH2D1B/EAT-2. Initially it has been proposed that association with SLAMF1 prevents SLAMF1 binding to inhibitory effectors including INPP5D/SHIP1 and PTPN11/SHP-2. However, by simultaneous interactions, recruits FYN which subsequently phosphorylates and activates SLAMF1. Positively regulates CD244/2B4- and CD84-mediated natural killer (NK) cell functions. Can also promote CD48-, SLAMF6 -, LY9-, and SLAMF7-mediated NK cell activation. In the context of NK cell-mediated cytotoxicity enhances conjugate formation with target cells. May also regulate the activity of the neurotrophin receptors NTRK1, NTRK2 and NTRK3. This chain is SH2 domain-containing protein 1A (SH2D1A), found in Sus scrofa (Pig).